A 98-amino-acid polypeptide reads, in one-letter code: Integration host factor subunit alpha (98 aa).

Residues 51–71 are disordered; that stretch reads NFDLRDKNERPGRNPKTGEDI. Basic and acidic residues predominate over residues 53–69; that stretch reads DLRDKNERPGRNPKTGE.

The protein belongs to the bacterial histone-like protein family. As to quaternary structure, heterodimer of an alpha and a beta chain.

Functionally, this protein is one of the two subunits of integration host factor, a specific DNA-binding protein that functions in genetic recombination as well as in transcriptional and translational control. This is Integration host factor subunit alpha from Vibrio parahaemolyticus serotype O3:K6 (strain RIMD 2210633).